We begin with the raw amino-acid sequence, 464 residues long: C-terminal processing peptidase, chloroplastic (464 aa).

A chloroplast-targeting transit peptide spans 1-32 (MHSRTNCLQTSVRAPQPHFRPFTAVKTCRQRC). The N-terminal 45 residues, 33 to 77 (STTAAAAKRDQAQEQQPWIQVGLGLAAAATAVAVGLGAAALPAQA), are a transit peptide targeting the thylakoid. One can recognise a PDZ domain in the interval 149–234 (LAALRRGTAG…SQVEVVLHAP (86 aa)). Catalysis depends on charge relay system residues serine 372 and lysine 397.

Belongs to the peptidase S41A family. As to quaternary structure, monomer.

It is found in the plastid. Its subcellular location is the chloroplast thylakoid lumen. The catalysed reaction is The enzyme shows specific recognition of a C-terminal tripeptide, Xaa-Yaa-Zaa, in which Xaa is preferably Ala or Leu, Yaa is preferably Ala or Tyr, and Zaa is preferably Ala, but then cleaves at a variable distance from the C-terminus. A typical cleavage is -Ala-Ala-|-Arg-Ala-Ala-Lys-Glu-Asn-Tyr-Ala-Leu-Ala-Ala.. Not inhibited by antipain, 4-amidinophenylmethanesulfonyl fluoride, aprotinin, chymostatin, 3,4-dichloroisocoumarin, diisopropyl fluorophosphate, E64, EDTA, EGTA, iodoacetamide, leupeptin, pepstatin, o-phenanthroline, N-ethylmaleimide, phosphoramidon or phenylmethylsulfonyl fluoride. In terms of biological role, protease involved in the C-terminal processing of the chloroplastic D1 protein of photosystem II. This proteolytic processing is necessary to allow the light-driven assembly of the tetranuclear manganese cluster, which is responsible for photosynthetic water oxidation. The sequence is that of C-terminal processing peptidase, chloroplastic (ctpA) from Tetradesmus obliquus (Green alga).